Here is a 157-residue protein sequence, read N- to C-terminus: 2-C-methyl-D-erythritol 2,4-cyclodiphosphate synthase (157 aa).

D8 and H10 together coordinate a divalent metal cation. 4-CDP-2-C-methyl-D-erythritol 2-phosphate-binding positions include 8–10 (DVH) and 34–35 (HS). H42 contributes to the a divalent metal cation binding site. 4-CDP-2-C-methyl-D-erythritol 2-phosphate-binding positions include 56–58 (DIG), 61–65 (FPDTD), 132–135 (TTTE), F139, and R142.

The protein belongs to the IspF family. In terms of assembly, homotrimer. Requires a divalent metal cation as cofactor.

The catalysed reaction is 4-CDP-2-C-methyl-D-erythritol 2-phosphate = 2-C-methyl-D-erythritol 2,4-cyclic diphosphate + CMP. The protein operates within isoprenoid biosynthesis; isopentenyl diphosphate biosynthesis via DXP pathway; isopentenyl diphosphate from 1-deoxy-D-xylulose 5-phosphate: step 4/6. Its function is as follows. Involved in the biosynthesis of isopentenyl diphosphate (IPP) and dimethylallyl diphosphate (DMAPP), two major building blocks of isoprenoid compounds. Catalyzes the conversion of 4-diphosphocytidyl-2-C-methyl-D-erythritol 2-phosphate (CDP-ME2P) to 2-C-methyl-D-erythritol 2,4-cyclodiphosphate (ME-CPP) with a corresponding release of cytidine 5-monophosphate (CMP). The chain is 2-C-methyl-D-erythritol 2,4-cyclodiphosphate synthase from Pseudomonas putida (strain W619).